Reading from the N-terminus, the 85-residue chain is Homeobox protein knotted-1-like 8 (85 aa).

The ELK domain occupies 1 to 21 (ELKHQLLRKYGGYLGGLRQEF). The segment at residues 22 to 85 (SKRKKKGKLP…NQRKRHWKPA (64 aa)) is a DNA-binding region (homeobox; TALE-type).

Belongs to the TALE/KNOX homeobox family. As to expression, strongly expressed in ear inflorescence primordia and shoot meristem. Weakly expressed in embryos. Absent from leaves.

It is found in the nucleus. Functionally, probably binds to the DNA sequence 5'-TGAC-3'. This Zea mays (Maize) protein is Homeobox protein knotted-1-like 8 (KNOX8).